The sequence spans 63 residues: Large ribosomal subunit protein bL28 (63 aa).

This sequence belongs to the bacterial ribosomal protein bL28 family.

The protein is Large ribosomal subunit protein bL28 of Symbiobacterium thermophilum (strain DSM 24528 / JCM 14929 / IAM 14863 / T).